A 266-amino-acid polypeptide reads, in one-letter code: Putative pyruvate, phosphate dikinase regulatory protein (266 aa).

149-156 lines the ADP pocket; that stretch reads GVSRTSKT.

The protein belongs to the pyruvate, phosphate/water dikinase regulatory protein family. PDRP subfamily.

The catalysed reaction is N(tele)-phospho-L-histidyl/L-threonyl-[pyruvate, phosphate dikinase] + ADP = N(tele)-phospho-L-histidyl/O-phospho-L-threonyl-[pyruvate, phosphate dikinase] + AMP + H(+). It carries out the reaction N(tele)-phospho-L-histidyl/O-phospho-L-threonyl-[pyruvate, phosphate dikinase] + phosphate + H(+) = N(tele)-phospho-L-histidyl/L-threonyl-[pyruvate, phosphate dikinase] + diphosphate. Bifunctional serine/threonine kinase and phosphorylase involved in the regulation of the pyruvate, phosphate dikinase (PPDK) by catalyzing its phosphorylation/dephosphorylation. The protein is Putative pyruvate, phosphate dikinase regulatory protein of Geobacillus sp. (strain WCH70).